The primary structure comprises 283 residues: Elongation factor Ts (283 aa).

The interval 84 to 87 (TDFV) is involved in Mg(2+) ion dislocation from EF-Tu.

It belongs to the EF-Ts family.

Its subcellular location is the cytoplasm. In terms of biological role, associates with the EF-Tu.GDP complex and induces the exchange of GDP to GTP. It remains bound to the aminoacyl-tRNA.EF-Tu.GTP complex up to the GTP hydrolysis stage on the ribosome. This Bifidobacterium longum subsp. infantis (strain ATCC 15697 / DSM 20088 / JCM 1222 / NCTC 11817 / S12) protein is Elongation factor Ts.